Reading from the N-terminus, the 200-residue chain is ATP-dependent Clp protease proteolytic subunit 1 (200 aa).

The Nucleophile role is filled by S98. Residue H123 is part of the active site.

It belongs to the peptidase S14 family. Fourteen ClpP subunits assemble into 2 heptameric rings which stack back to back to give a disk-like structure with a central cavity, resembling the structure of eukaryotic proteasomes.

It is found in the cytoplasm. The catalysed reaction is Hydrolysis of proteins to small peptides in the presence of ATP and magnesium. alpha-casein is the usual test substrate. In the absence of ATP, only oligopeptides shorter than five residues are hydrolyzed (such as succinyl-Leu-Tyr-|-NHMec, and Leu-Tyr-Leu-|-Tyr-Trp, in which cleavage of the -Tyr-|-Leu- and -Tyr-|-Trp bonds also occurs).. In terms of biological role, cleaves peptides in various proteins in a process that requires ATP hydrolysis. Has a chymotrypsin-like activity. Plays a major role in the degradation of misfolded proteins. This Mycobacterium leprae (strain TN) protein is ATP-dependent Clp protease proteolytic subunit 1.